Reading from the N-terminus, the 244-residue chain is Cobalt transport protein CbiM (244 aa).

A signal peptide spans 1–28 (MKKLWKFIPFVLMGVIYFTLTNPESAHA). Helical transmembrane passes span 37-57 (PVKW…LGLI), 71-91 (LLLA…IPSV), 103-123 (LATV…VLLF), 135-155 (TLGA…FVVY), 166-186 (SVSI…TTSV), and 206-226 (FMAI…LLTV).

Belongs to the CbiM family. In terms of assembly, forms an energy-coupling factor (ECF) transporter complex composed of an ATP-binding protein (A component, CbiO), a transmembrane protein (T component, CbiQ) and 2 possible substrate-capture proteins (S components, CbiM and CbiN) of unknown stoichimetry.

The protein localises to the cell membrane. It participates in cofactor biosynthesis; adenosylcobalamin biosynthesis. Part of the energy-coupling factor (ECF) transporter complex CbiMNOQ involved in cobalt import. This chain is Cobalt transport protein CbiM, found in Listeria seeligeri serovar 1/2b (strain ATCC 35967 / DSM 20751 / CCM 3970 / CCUG 15530 / CIP 100100 / LMG 11386 / NCTC 11856 / SLCC 3954 / 1120).